The primary structure comprises 287 residues: UPF0098 protein AF_1698 (287 aa).

The protein belongs to the UPF0098 family.

This Archaeoglobus fulgidus (strain ATCC 49558 / DSM 4304 / JCM 9628 / NBRC 100126 / VC-16) protein is UPF0098 protein AF_1698.